Reading from the N-terminus, the 204-residue chain is Urease accessory protein UreG 1 (204 aa).

14 to 21 (GPVGSGKT) is a binding site for GTP.

It belongs to the SIMIBI class G3E GTPase family. UreG subfamily. As to quaternary structure, homodimer. UreD, UreF and UreG form a complex that acts as a GTP-hydrolysis-dependent molecular chaperone, activating the urease apoprotein by helping to assemble the nickel containing metallocenter of UreC. The UreE protein probably delivers the nickel.

The protein resides in the cytoplasm. Its function is as follows. Facilitates the functional incorporation of the urease nickel metallocenter. This process requires GTP hydrolysis, probably effectuated by UreG. This chain is Urease accessory protein UreG 1, found in Methylorubrum populi (strain ATCC BAA-705 / NCIMB 13946 / BJ001) (Methylobacterium populi).